A 269-amino-acid polypeptide reads, in one-letter code: Mitochondrial scaffolding protein 1 (269 aa).

The 73-residue stretch at 49–121 (VVEIEKTSKG…HDEAVEVFRS (73 aa)) folds into the PDZ domain. The disordered stretch occupies residues 143 to 185 (RTQTPTASVSITPQVTPQTRSTQNNTDTPKSMSHSESKSRLTS). Polar residues predominate over residues 145 to 174 (QTPTASVSITPQVTPQTRSTQNNTDTPKSM). The chain crosses the membrane as a helical span at residues 240–262 (WLTEALYVSIGLGALTISGYLAY).

It is found in the membrane. Plays a role in the regulation of lifespan in a partially daf-16-mediated manner, and may be involved in regulating the levels of reactive oxygen species production in response to heat stress. The sequence is that of Mitochondrial scaffolding protein 1 from Caenorhabditis elegans.